Here is a 210-residue protein sequence, read N- to C-terminus: Synaptosomal-associated protein 23 (210 aa).

At methionine 1 the chain carries N-acetylmethionine. Phosphoserine is present on residues serine 5, serine 20, serine 23, and serine 34. The region spanning 14 to 76 is the t-SNARE coiled-coil homology 1 domain; that stretch reads HQVTDESLES…REAEKTLTEL (63 aa). Residues 23–76 adopt a coiled-coil conformation; it reads STRRILGLAIESQDAGIKTITMLDEQGEQLNRIEEGMDQINKDMREAEKTLTEL. S-palmitoyl cysteine attachment occurs at residues cysteine 79, cysteine 80, cysteine 83, cysteine 85, and cysteine 87. Residues 104 to 136 are disordered; it reads GDGGDSSPSNVVSKQPSRITNGQPQQTTGAASG. Residues 109 to 133 are compositionally biased toward polar residues; it reads SSPSNVVSKQPSRITNGQPQQTTGA. Phosphoserine is present on residues serine 110 and serine 160. Positions 145 to 207 constitute a t-SNARE coiled-coil homology 2 domain; the sequence is DAREDEMEEN…DIANTRAKKL (63 aa).

Belongs to the SNAP-25 family. Homotetramer (via coiled-coil domain), also forms heterotetramers with STX4 and VAMP3. Found in a complex with VAMP8 and STX1A. Found in a complex with VAMP8 and STX4 in pancreas. Interacts simultaneously with SNAPIN and SYN4. Interacts with STX1A. Interacts with STX12. Interacts tightly to multiple syntaxins and synaptobrevins/VAMPs. Interacts with ZDHHC13 (via ANK repeats). Interacts with ZDHHC17 (via ANK repeats).

The protein resides in the cell membrane. It localises to the synapse. The protein localises to the synaptosome. Its subcellular location is the cytoplasmic vesicle membrane. In terms of biological role, essential component of the high affinity receptor for the general membrane fusion machinery and an important regulator of transport vesicle docking and fusion. This Rattus norvegicus (Rat) protein is Synaptosomal-associated protein 23 (Snap23).